Reading from the N-terminus, the 611-residue chain is Histone acetyltransferase KAT7 (611 aa).

The segment at 1-173 (MPRRKRNAGS…SDLSHRPKRR (173 aa)) is disordered. Ser10 is subject to Phosphoserine. Positions 42–57 (VTRSSARLSQSSQDSS) are enriched in low complexity. Phosphoserine; by ATR occurs at positions 50 and 53. At Ser57 the chain carries Phosphoserine; by PLK1. Residue Ser64 is modified to Phosphoserine. Residues Thr85 and Thr88 each carry the phosphothreonine; by CDK1 modification. Residues 96 to 105 (QTRSSGSETE) are compositionally biased toward polar residues. Phosphoserine is present on Ser102. The residue at position 104 (Thr104) is a Phosphothreonine. Basic and acidic residues predominate over residues 110–125 (FSDRETKNTADHDESP). A phosphoserine mark is found at Ser111 and Ser124. Phosphothreonine is present on Thr128. Low complexity predominate over residues 134 to 145 (PSSESDIDISSP). The span at 148-168 (SHDESIAKDMSLKDSGSDLSH) shows a compositional bias: basic and acidic residues. Phosphoserine is present on residues Ser158, Ser162, Ser164, and Ser178. The CCHHC-type zinc-finger motif lies at 176 to 219 (HESYNFNMKCPTPGCNSLGHLTGKHERHFSISGCPLYHNLSADE). 2 positions are modified to N6-acetyllysine: Lys199 and Lys277. Lys323 is covalently cross-linked (Glycyl lysine isopeptide (Lys-Gly) (interchain with G-Cter in SUMO2)). Residues 332–607 (EGSNMIKTIA…MDPSCLKWTP (276 aa)) form the MYST-type HAT domain. Residue Lys338 forms a Glycyl lysine isopeptide (Lys-Gly) (interchain with G-Cter in ubiquitin) linkage. Residues 365 to 390 (LYMCEFCLKYMKSQTILRRHMAKCVW) form a C2HC MYST-type zinc finger. 4 residues coordinate Zn(2+): Cys368, Cys371, His384, and Cys388. Lys432 is subject to N6-acetyllysine; by autocatalysis. Acetyl-CoA contacts are provided by residues 475–477 (ILT) and 483–488 (RQGYGK). Ser506 is modified (phosphoserine). Glu508 acts as the Proton donor/acceptor in catalysis. Ser512 and Ser521 together coordinate acetyl-CoA.

This sequence belongs to the MYST (SAS/MOZ) family. As to quaternary structure, component of the HBO1 complex composed of KAT7/HBO1, MEAF6, ING4 or ING5, and one scaffold subunit: complexes containing BRPF scaffold (BRPF1, BRD1/BRPF2 or BRPF3) direct KAT7/HBO1 specificity towards H3K14ac, while complexes containing JADE scaffold (JADE1, JADE2 and JADE3) mediate acetylation of histone H4. Interacts with MCM2 and ORC1. Interacts with the androgen receptor (AR); in the presence of dihydrotestosterone. Interacts with CDT1. Interacts with MAP2K1 and CUL1. Interacts with p53/TP53; leading to inhibit histone acetyltransferase activity. Interacts with MIS18BP1. In terms of processing, phosphorylated at Ser-50 and Ser-53 by ATR in response to DNA damage, promoting its ubiquitination by the CRL4(DDB2) complex and subsequent degradation. Phosphorylation at Ser-50 and Ser-53 by ATR in response to ultraviolet-induced DNA, promotes localization to DNA damage sites. Phosphorylation at Ser-57 by PLK1 during mitosis seems important for prereplicative complex formation and DNA replication licensing, and requires prior phosphorylation at Thr-85 and Thr-88 by CDK1. Phosphorylated by MAP2K1, which accelerates its degradation. Ubiquitinated at Lys-338, leading to proteasomal degradation. Ubiquitinated by the CRL4(DDB2) complex following phosphorylation by ATR, leading to its subsequent degradation. Post-translationally, autoacetylation at Lys-432 is required for proper function. Ubiquitously expressed, with highest levels in testis.

The protein localises to the nucleus. The protein resides in the chromosome. It is found in the centromere. Its subcellular location is the cytoplasm. It localises to the cytosol. The enzyme catalyses L-lysyl-[histone] + acetyl-CoA = N(6)-acetyl-L-lysyl-[histone] + CoA + H(+). Histone acetyltransferase activity is inhibited by GMNN in the context of a complex with CDT1, inhibiting histone H4 acetylation and DNA replication licensing. Selectively inhibited by WM-3835 (N'-(4-fluoro-5-methyl-[1,1'-biphenyl]-3-carbonyl)-3- hydroxybenzenesulfonohydrazide) inhibitor. In terms of biological role, catalytic subunit of histone acetyltransferase HBO1 complexes, which specifically mediate acetylation of histone H3 at 'Lys-14' (H3K14ac), thereby regulating various processes, such as gene transcription, protein ubiquitination, immune regulation, stem cell pluripotent and self-renewal maintenance and embryonic development. Some complexes also catalyze acetylation of histone H4 at 'Lys-5', 'Lys-8' and 'Lys-12' (H4K5ac, H4K8ac and H4K12ac, respectively), regulating DNA replication initiation, regulating DNA replication initiation. Specificity of the HBO1 complexes is determined by the scaffold subunit: complexes containing BRPF scaffold (BRPF1, BRD1/BRPF2 or BRPF3) direct KAT7/HBO1 specificity towards H3K14ac, while complexes containing JADE (JADE1, JADE2 and JADE3) scaffold direct KAT7/HBO1 specificity towards histone H4. H3K14ac promotes transcriptional elongation by facilitating the processivity of RNA polymerase II. Acts as a key regulator of hematopoiesis by forming a complex with BRD1/BRPF2, directing KAT7/HBO1 specificity towards H3K14ac and promoting erythroid differentiation. H3K14ac is also required for T-cell development. KAT7/HBO1-mediated acetylation facilitates two consecutive steps, licensing and activation, in DNA replication initiation: H3K14ac facilitates the activation of replication origins, and histone H4 acetylation (H4K5ac, H4K8ac and H4K12ac) facilitates chromatin loading of MCM complexes, promoting DNA replication licensing. Acts as a positive regulator of centromeric CENPA assembly: recruited to centromeres and mediates histone acetylation, thereby preventing centromere inactivation mediated by SUV39H1, possibly by increasing histone turnover/exchange. Involved in nucleotide excision repair: phosphorylation by ATR in response to ultraviolet irradiation promotes its localization to DNA damage sites, where it mediates histone acetylation to facilitate recruitment of XPC at the damaged DNA sites. Acts as an inhibitor of NF-kappa-B independently of its histone acetyltransferase activity. Functionally, plays a central role in the maintenance of leukemia stem cells in acute myeloid leukemia (AML). Acts by mediating acetylation of histone H3 at 'Lys-14' (H3K14ac), thereby facilitating the processivity of RNA polymerase II to maintain the high expression of key genes, such as HOXA9 and HOXA10 that help to sustain the functional properties of leukemia stem cells. This Homo sapiens (Human) protein is Histone acetyltransferase KAT7.